We begin with the raw amino-acid sequence, 262 residues long: Hydroxyacylglutathione hydrolase (262 aa).

Histidine 53, histidine 55, aspartate 57, histidine 58, histidine 111, aspartate 128, and histidine 166 together coordinate Zn(2+).

Belongs to the metallo-beta-lactamase superfamily. Glyoxalase II family. Monomer. It depends on Zn(2+) as a cofactor.

The catalysed reaction is an S-(2-hydroxyacyl)glutathione + H2O = a 2-hydroxy carboxylate + glutathione + H(+). Its pathway is secondary metabolite metabolism; methylglyoxal degradation; (R)-lactate from methylglyoxal: step 2/2. Functionally, thiolesterase that catalyzes the hydrolysis of S-D-lactoyl-glutathione to form glutathione and D-lactic acid. The protein is Hydroxyacylglutathione hydrolase of Nitrosomonas europaea (strain ATCC 19718 / CIP 103999 / KCTC 2705 / NBRC 14298).